A 132-amino-acid chain; its full sequence is Transcriptional repressor SmtB homolog (132 aa).

Positions 20, 26, 71, 73, 114, 116, 127, and 130 each coordinate Zn(2+). Positions 38-132 (MSLDQAQQMA…EVADHLQESD (95 aa)) constitute an HTH arsR-type domain. A DNA-binding region (H-T-H motif) is located at residues 72–91 (VCDLAAAMKVSESAVSHQLR).

As to quaternary structure, homodimer.

Functionally, transcriptional repressor of the expression of the ziaA gene. Controls zinc homeostasis by triggering ZiaA-mediated efflux of excess zinc into the periplasm. The sequence is that of Transcriptional repressor SmtB homolog (ziaR) from Synechocystis sp. (strain ATCC 27184 / PCC 6803 / Kazusa).